A 235-amino-acid polypeptide reads, in one-letter code: MIYAGILAGGTGTRMGISNLPKQFLELGNRPILIHTIEKFVLEPSIEKIVVGVHGDWVSHAEDLVDKYLPLYKERIIITKGGADRNTSIKKIIEAIDAYRPLTPEDIVVTHDSVRPFITLRMIQDNIQLAQNHDAVDTVVEAVDTIVESTNGQFITDIPNRAHLYQGQTPQTFRCKDFMDLYGSLSDEEKEILTDACKIFVIKGKDVALAKGEYSNLKITTVTDLKIAKSMIEKD.

Residues 7–10 (LAGG), 82–88 (GADRNTS), and Ser-113 each bind CTP.

Belongs to the IspD/TarI cytidylyltransferase family. TarI subfamily.

It catalyses the reaction D-ribitol 5-phosphate + CTP + H(+) = CDP-L-ribitol + diphosphate. The protein operates within cell wall biogenesis; poly(ribitol phosphate) teichoic acid biosynthesis. Catalyzes the transfer of the cytidylyl group of CTP to D-ribitol 5-phosphate. The polypeptide is Ribitol-5-phosphate cytidylyltransferase (Streptococcus pneumoniae (strain ATCC 700669 / Spain 23F-1)).